Reading from the N-terminus, the 186-residue chain is Ribonuclease M5 (186 aa).

A Toprim domain is found at 6–89; that stretch reads SQVIVVEGRD…AFLKRDEAVP (84 aa). Glutamate 12, aspartate 58, and aspartate 60 together coordinate Mg(2+).

Belongs to the ribonuclease M5 family. The cofactor is Mg(2+).

It localises to the cytoplasm. It carries out the reaction Endonucleolytic cleavage of RNA, removing 21 and 42 nucleotides, respectively, from the 5'- and 3'-termini of a 5S-rRNA precursor.. Required for correct processing of both the 5' and 3' ends of 5S rRNA precursor. Cleaves both sides of a double-stranded region yielding mature 5S rRNA in one step. The protein is Ribonuclease M5 of Streptococcus pneumoniae (strain ATCC BAA-255 / R6).